The chain runs to 279 residues: Movement protein (279 aa).

The segment covering 256-266 (PPIAIGSPSAS) has biased composition (low complexity). Residues 256 to 279 (PPIAIGSPSASRNNSFRSQVVNGL) form a disordered region. Residues 267 to 279 (RNNSFRSQVVNGL) show a composition bias toward polar residues.

This sequence belongs to the cucumovirus movement protein family.

It is found in the host cell junction. It localises to the host plasmodesma. Its function is as follows. Transports viral genome to neighboring plant cells directly through plasmosdesmata, without any budding. The movement protein allows efficient cell to cell propagation, by bypassing the host cell wall barrier. Acts by forming a tubular structure at the host plasmodesmata, enlarging it enough to allow free passage of virion capsids. The sequence is that of Movement protein from Cucumis sativus (Cucumber).